The chain runs to 589 residues: Mitoguardin 2 (589 aa).

The next 2 membrane-spanning stretches (helical) occupy residues 11–31 and 42–62; these read IIQALAMTVAEIPVFLYTTFG and PGLRKVLFATALGTVALALAA. Positions 87–134 are disordered; sequence VPGSVLPVRRSSSAKKGYSRSRVQSPSSKSNDTLSGISSLDPSKHSSS. Composition is skewed to low complexity over residues 106-116 and 123-134; these read RSRVQSPSSKS and ISSLDPSKHSSS.

This sequence belongs to the mitoguardin family. Homodimer and heterodimer; forms heterodimers with miga1.

The protein resides in the mitochondrion outer membrane. In terms of biological role, regulator of mitochondrial fusion: acts by forming homo- and heterodimers at the mitochondrial outer membrane and facilitating the formation of pld6/MitoPLD dimers. May act by regulating phospholipid metabolism via pld6/MitoPLD. This chain is Mitoguardin 2, found in Xenopus laevis (African clawed frog).